We begin with the raw amino-acid sequence, 506 residues long: GTPase Der (506 aa).

EngA-type G domains lie at 3–166 and 218–391; these read PVVA…GEQL and IKIA…ACAT. GTP is bound by residues 9–16, 56–60, 118–121, 224–231, 271–275, and 336–339; these read GRPNVGKS, DTGGI, NKTD, DTAGV, and NKWD. Residues 392–476 form the KH-like domain; that stretch reads QKTSTSMLTR…PIRIQFQEGN (85 aa).

Belongs to the TRAFAC class TrmE-Era-EngA-EngB-Septin-like GTPase superfamily. EngA (Der) GTPase family. Associates with the 50S ribosomal subunit.

Functionally, GTPase that plays an essential role in the late steps of ribosome biogenesis. The sequence is that of GTPase Der from Actinobacillus pleuropneumoniae serotype 3 (strain JL03).